Consider the following 287-residue polypeptide: Phosphatidylserine decarboxylase proenzyme (287 aa).

Catalysis depends on charge relay system; for autoendoproteolytic cleavage activity residues Asp-90, His-147, and Ser-252. The active-site Schiff-base intermediate with substrate; via pyruvic acid; for decarboxylase activity is the Ser-252. Pyruvic acid (Ser); by autocatalysis is present on Ser-252.

It belongs to the phosphatidylserine decarboxylase family. PSD-B subfamily. Prokaryotic type I sub-subfamily. As to quaternary structure, heterodimer of a large membrane-associated beta subunit and a small pyruvoyl-containing alpha subunit. Pyruvate serves as cofactor. In terms of processing, is synthesized initially as an inactive proenzyme. Formation of the active enzyme involves a self-maturation process in which the active site pyruvoyl group is generated from an internal serine residue via an autocatalytic post-translational modification. Two non-identical subunits are generated from the proenzyme in this reaction, and the pyruvate is formed at the N-terminus of the alpha chain, which is derived from the carboxyl end of the proenzyme. The autoendoproteolytic cleavage occurs by a canonical serine protease mechanism, in which the side chain hydroxyl group of the serine supplies its oxygen atom to form the C-terminus of the beta chain, while the remainder of the serine residue undergoes an oxidative deamination to produce ammonia and the pyruvoyl prosthetic group on the alpha chain. During this reaction, the Ser that is part of the protease active site of the proenzyme becomes the pyruvoyl prosthetic group, which constitutes an essential element of the active site of the mature decarboxylase.

It is found in the cell membrane. The catalysed reaction is a 1,2-diacyl-sn-glycero-3-phospho-L-serine + H(+) = a 1,2-diacyl-sn-glycero-3-phosphoethanolamine + CO2. The protein operates within phospholipid metabolism; phosphatidylethanolamine biosynthesis; phosphatidylethanolamine from CDP-diacylglycerol: step 2/2. Its function is as follows. Catalyzes the formation of phosphatidylethanolamine (PtdEtn) from phosphatidylserine (PtdSer). This chain is Phosphatidylserine decarboxylase proenzyme, found in Pseudomonas putida (strain ATCC 47054 / DSM 6125 / CFBP 8728 / NCIMB 11950 / KT2440).